The primary structure comprises 334 residues: MEPRTGDAADPRGSRGGRGPSPLAGPSARQLLARLDARPLAARAAVDVAALVRRAGATLRLRRKEAVSVLDSADIEVTDSRLPHATIVDHRPQHRWLETCNAPPQLIQGKARSAPKPSQASGHFSVELVRGYAGFGLTLGGGRDVAGDTPLAVRGLLKDGPAQRCGRLEVGDLVLHINGESTQGLTHAQAVERIRAGGPQLHLVIRRPLETHPGKPRGVGEPRKGVVPSWPDRSPDPGGPEVTGSRSSSTSLVQHPPSRTTLKKTRGSPEPSPEAAADGPTVSPPERRAEDPNDQIPGSPGPWLVPSEERLSRALGVRGAAQLAQEMAAGRRRH.

Basic and acidic residues-rich tracts occupy residues 1–13 (MEPR…DPRG) and 209–224 (LETH…EPRK). Disordered stretches follow at residues 1 to 26 (MEPR…LAGP) and 209 to 306 (LETH…WLVP). The PDZ domain occupies 125-209 (SVELVRGYAG…QLHLVIRRPL (85 aa)). Over residues 244–260 (GSRSSSTSLVQHPPSRT) the composition is skewed to polar residues. Residue Ser-272 is modified to Phosphoserine.

This is PDZ domain-containing protein MAGIX (MAGIX) from Homo sapiens (Human).